Reading from the N-terminus, the 215-residue chain is Ribonuclease T (215 aa).

In terms of domain architecture, Exonuclease spans 20–194; that stretch reads VVIDVETAGF…YDTMQTAKLF (175 aa). Residues Asp-23, Glu-25, His-181, and Asp-186 each coordinate Mg(2+). The active-site Proton donor/acceptor is the His-181.

It belongs to the RNase T family. In terms of assembly, homodimer. Mg(2+) serves as cofactor.

Trims short 3' overhangs of a variety of RNA species, leaving a one or two nucleotide 3' overhang. Responsible for the end-turnover of tRNA: specifically removes the terminal AMP residue from uncharged tRNA (tRNA-C-C-A). Also appears to be involved in tRNA biosynthesis. This is Ribonuclease T from Yersinia enterocolitica serotype O:8 / biotype 1B (strain NCTC 13174 / 8081).